Reading from the N-terminus, the 299-residue chain is Regucalcin (299 aa).

Glutamate 18 is a binding site for a divalent metal cation. Residues arginine 101, asparagine 103, and glutamate 121 each contribute to the substrate site. Residues asparagine 154 and aspartate 204 each contribute to the a divalent metal cation site. Catalysis depends on aspartate 204, which acts as the Proton donor/acceptor. Residues lysine 244 and lysine 253 each carry the N6-succinyllysine modification.

Belongs to the SMP-30/CGR1 family. In terms of assembly, monomer. Requires Zn(2+) as cofactor. Mn(2+) serves as cofactor. The cofactor is Ca(2+). Mg(2+) is required as a cofactor.

It localises to the cytoplasm. It carries out the reaction D-glucono-1,5-lactone + H2O = D-gluconate + H(+). Its pathway is cofactor biosynthesis; L-ascorbate biosynthesis via UDP-alpha-D-glucuronate pathway; L-ascorbate from UDP-alpha-D-glucuronate: step 3/4. Gluconolactonase with low activity towards other sugar lactones, including gulonolactone and galactonolactone. Catalyzes a key step in ascorbic acid (vitamin C) biosynthesis. Can also hydrolyze diisopropyl phosphorofluoridate and phenylacetate (in vitro). Calcium-binding protein. Modulates Ca(2+) signaling, and Ca(2+)-dependent cellular processes and enzyme activities. The protein is Regucalcin (RGN) of Bos taurus (Bovine).